A 591-amino-acid polypeptide reads, in one-letter code: Aspartate--tRNA(Asp/Asn) ligase (591 aa).

Position 175 (glutamate 175) interacts with L-aspartate. An aspartate region spans residues glutamine 199–lysine 202. Positions 221 and 453 each coordinate L-aspartate. Residue arginine 221–glutamate 223 coordinates ATP. Glutamate 486 provides a ligand contact to ATP. Arginine 493 serves as a coordination point for L-aspartate. Glycine 538–arginine 541 contacts ATP.

This sequence belongs to the class-II aminoacyl-tRNA synthetase family. Type 1 subfamily. In terms of assembly, homodimer.

The protein localises to the cytoplasm. It catalyses the reaction tRNA(Asx) + L-aspartate + ATP = L-aspartyl-tRNA(Asx) + AMP + diphosphate. Its function is as follows. Aspartyl-tRNA synthetase with relaxed tRNA specificity since it is able to aspartylate not only its cognate tRNA(Asp) but also tRNA(Asn). Reaction proceeds in two steps: L-aspartate is first activated by ATP to form Asp-AMP and then transferred to the acceptor end of tRNA(Asp/Asn). This chain is Aspartate--tRNA(Asp/Asn) ligase, found in Roseobacter denitrificans (strain ATCC 33942 / OCh 114) (Erythrobacter sp. (strain OCh 114)).